A 605-amino-acid polypeptide reads, in one-letter code: Sulfite reductase [NADPH] flavoprotein alpha-component (605 aa).

The 139-residue stretch at 70–208 (LTIIYASQTG…PAAEWRVKAL (139 aa)) folds into the Flavodoxin-like domain. FMN is bound by residues 76–81 (SQTGNA), 123–126 (STHG), and 159–168 (LGDSSYEFFC). One can recognise an FAD-binding FR-type domain in the interval 240 to 454 (QNPYEATLLT…VEENNNFKLP (215 aa)). Residues Thr-328, Gly-362, 392-395 (RLYS), 410-412 (TVG), and 425-428 (GGAS) each bind FAD. NADP(+) contacts are provided by residues 525–526 (SR), 531–535 (KVYVQ), and Asp-567. Position 605 (Tyr-605) interacts with FAD.

Belongs to the NADPH-dependent sulphite reductase flavoprotein subunit CysJ family. It in the N-terminal section; belongs to the flavodoxin family. This sequence in the C-terminal section; belongs to the flavoprotein pyridine nucleotide cytochrome reductase family. In terms of assembly, alpha(8)-beta(8). The alpha component is a flavoprotein, the beta component is a hemoprotein. Requires FAD as cofactor. The cofactor is FMN.

The catalysed reaction is hydrogen sulfide + 3 NADP(+) + 3 H2O = sulfite + 3 NADPH + 4 H(+). Its pathway is sulfur metabolism; hydrogen sulfide biosynthesis; hydrogen sulfide from sulfite (NADPH route): step 1/1. In terms of biological role, component of the sulfite reductase complex that catalyzes the 6-electron reduction of sulfite to sulfide. This is one of several activities required for the biosynthesis of L-cysteine from sulfate. The flavoprotein component catalyzes the electron flow from NADPH -&gt; FAD -&gt; FMN to the hemoprotein component. The chain is Sulfite reductase [NADPH] flavoprotein alpha-component from Photobacterium profundum (strain SS9).